We begin with the raw amino-acid sequence, 1372 residues long: Serine protease pic autotransporter (1372 aa).

An N-terminal signal peptide occupies residues 1–55; that stretch reads MNKVYSLKYCPVTGGLIAVSELARRVIKKTCRRLTHILLAGIPAICLCYSQISQA. The region spanning 56 to 301 is the Peptidase S6 domain; the sequence is GIVRSDIAYQ…NVIPTDYLNQ (246 aa). Catalysis depends on charge relay system residues histidine 127, aspartate 155, and serine 258. The Autotransporter domain maps to 1106–1372; the sequence is DTNGDAGAWA…AVNANFRYMF (267 aa).

Cleaved to release the mature protein from the outer membrane.

It localises to the periplasm. Its subcellular location is the secreted. The protein resides in the cell surface. It is found in the cell outer membrane. In terms of biological role, involved in intestinal colonization, displays in vitro mucinolytic activity, serum resistance, and hemagglutination. Important to penetrate the intestinal mucus layer. In Shigella flexneri, this protein is Serine protease pic autotransporter (pic).